Consider the following 604-residue polypeptide: Putative sodium-dependent multivitamin transporter (604 aa).

Transmembrane regions (helical) follow at residues 4–24 (LGAW…AIGI), 48–68 (VAPV…ILGV), 78–98 (MFVV…YLII), 134–154 (VLYM…VTGL), 160–180 (IVIV…KAVL), and 188–208 (LLMF…AGSL). Residues N222 and N225 are each glycosylated (N-linked (GlcNAc...) asparagine). 7 consecutive transmembrane segments (helical) span residues 234–254 (HTWF…YGVN), 273–293 (ALWW…FSGL), 331–351 (LAGL…SSII), 389–409 (LFFG…GGLL), 413–433 (LSIF…GMYV), 440–460 (GAIG…FGQP), and 511–531 (ALGF…FALL).

This sequence belongs to the sodium:solute symporter (SSF) (TC 2.A.21) family.

It is found in the cell membrane. The chain is Putative sodium-dependent multivitamin transporter from Drosophila melanogaster (Fruit fly).